The primary structure comprises 181 residues: CASP-like protein 1F1 (181 aa).

Residues 1 to 18 lie on the Cytoplasmic side of the membrane; the sequence is MPNNEAKFSVNQPLKTQK. Residues 19–39 form a helical membrane-spanning segment; that stretch reads LFIGVQIFFRIVAIAASVASS. Residues 40-70 lie on the Extracellular side of the membrane; sequence WLMITSKQVIDIGGIVLDARYSYSPEFKFLA. Residues 71 to 91 traverse the membrane as a helical segment; sequence FTNIVVGCFSLLSLLFLVLVV. Over 92-100 the chain is Cytoplasmic; sequence RQGSNPNHY. The chain crosses the membrane as a helical span at residues 101–121; that stretch reads FFLFLHDLAMMSLVVGGCAAA. Residues 122 to 152 are Extracellular-facing; the sequence is TTVGFLGKHGNSHTGWMQICDNFGKFCNRAQ. A helical transmembrane segment spans residues 153 to 173; the sequence is TSVTISYLNLICLSILTITSA. The Cytoplasmic portion of the chain corresponds to 174-181; the sequence is SKSRKMEA.

The protein belongs to the Casparian strip membrane proteins (CASP) family. As to quaternary structure, homodimer and heterodimers.

Its subcellular location is the cell membrane. The sequence is that of CASP-like protein 1F1 from Populus trichocarpa (Western balsam poplar).